The following is a 204-amino-acid chain: Nascent polypeptide-associated complex subunit alpha (204 aa).

Basic and acidic residues predominate over residues M1–V19. Disordered stretches follow at residues M1–R47 and Q118–A167. Over residues A22–E32 the composition is skewed to acidic residues. The 66-residue stretch at S46 to A111 folds into the NAC-A/B domain. Residues Q118 to E128 show a composition bias toward low complexity. A compositionally biased stretch (basic and acidic residues) spans H129–E151. Positions E152–G164 are enriched in acidic residues. A UBA domain is found at L165–I204.

Belongs to the NAC-alpha family. Part of the nascent polypeptide-associated complex (NAC), consisting of egd2 and egd1. NAC associates with ribosomes via egd1.

The protein localises to the cytoplasm. It is found in the nucleus. Component of the nascent polypeptide-associated complex (NAC), a dynamic component of the ribosomal exit tunnel, protecting the emerging polypeptides from interaction with other cytoplasmic proteins to ensure appropriate nascent protein targeting. The NAC complex also promotes mitochondrial protein import by enhancing productive ribosome interactions with the outer mitochondrial membrane and blocks the inappropriate interaction of ribosomes translating non-secretory nascent polypeptides with translocation sites in the membrane of the endoplasmic reticulum. Egd2 may also be involved in transcription regulation. The sequence is that of Nascent polypeptide-associated complex subunit alpha (egd2) from Aspergillus fumigatus (strain ATCC MYA-4609 / CBS 101355 / FGSC A1100 / Af293) (Neosartorya fumigata).